Here is a 267-residue protein sequence, read N- to C-terminus: Cell division protein FtsQ (267 aa).

The Cytoplasmic segment spans residues 1-32 (MRKKTSSNKKKQTKKTNNISLRRKLRLIYKKA). A helical transmembrane segment spans residues 33–53 (ILGLKIALIIFVCLFVFTKYF). Topologically, residues 54–267 (AGIKTYLTTN…DKNKYYIEKY (214 aa)) are periplasmic. A POTRA domain is found at 73 to 141 (FKLENVIIEG…NTVYIKLFER (69 aa)).

It belongs to the FtsQ/DivIB family. FtsQ subfamily.

The protein resides in the cell inner membrane. In terms of biological role, essential cell division protein. In Rickettsia felis (strain ATCC VR-1525 / URRWXCal2) (Rickettsia azadi), this protein is Cell division protein FtsQ.